The sequence spans 146 residues: Snaclec agkisacutacin subunit B (146 aa).

Positions 1–23 are cleaved as a signal peptide; that stretch reads MGRFIFVSFGLLVVFLSLSGTAA. Residues 24-146 form the C-type lectin domain; that stretch reads DCPSDWSSYE…TCSFVCKFQA (123 aa). Disulfide bonds link cysteine 25/cysteine 36, cysteine 53/cysteine 142, and cysteine 119/cysteine 134. The Ca(2+) site is built by serine 64 and glutamate 70.

The protein belongs to the snaclec family. As to quaternary structure, heterodimer of subunits A and B; disulfide-linked. As to expression, expressed by the venom gland.

Its subcellular location is the secreted. In terms of biological role, anticoagulant protein which binds to the gamma-carboxyglutamic acid-domain regions of factor IX (F9) and factor X (F10) in the presence of calcium with a 1 to 1 stoichiometry. Also inhibits platelet aggregation by binding to platelet glycoprotein Ibalpha (GP1BA) and functioning as a blocker of von Willebrand factor (VWF). Is devoid of hemorrhagic and lethal activities. Possesses antithrombotic and thrombolytic activities. Also hydrolyzes the Aalpha-chain of fibrinogen (FGA). Does not affect the Bbeta-chain (FGB) and the gamma chain (FGG). This Deinagkistrodon acutus (Hundred-pace snake) protein is Snaclec agkisacutacin subunit B.